The sequence spans 308 residues: 4-hydroxy-3-methylbut-2-enyl diphosphate reductase (308 aa).

Cys-13 provides a ligand contact to [4Fe-4S] cluster. (2E)-4-hydroxy-3-methylbut-2-enyl diphosphate contacts are provided by His-42 and His-75. Positions 42 and 75 each coordinate dimethylallyl diphosphate. Isopentenyl diphosphate contacts are provided by His-42 and His-75. Residue Cys-97 participates in [4Fe-4S] cluster binding. His-125 provides a ligand contact to (2E)-4-hydroxy-3-methylbut-2-enyl diphosphate. His-125 provides a ligand contact to dimethylallyl diphosphate. His-125 contacts isopentenyl diphosphate. Glu-127 functions as the Proton donor in the catalytic mechanism. Residue Thr-165 participates in (2E)-4-hydroxy-3-methylbut-2-enyl diphosphate binding. Cys-195 is a [4Fe-4S] cluster binding site. Residues Ser-223, Ser-224, Asn-225, and Ser-267 each coordinate (2E)-4-hydroxy-3-methylbut-2-enyl diphosphate. Residues Ser-223, Ser-224, Asn-225, and Ser-267 each coordinate dimethylallyl diphosphate. Isopentenyl diphosphate is bound by residues Ser-223, Ser-224, Asn-225, and Ser-267.

The protein belongs to the IspH family. [4Fe-4S] cluster serves as cofactor.

It carries out the reaction isopentenyl diphosphate + 2 oxidized [2Fe-2S]-[ferredoxin] + H2O = (2E)-4-hydroxy-3-methylbut-2-enyl diphosphate + 2 reduced [2Fe-2S]-[ferredoxin] + 2 H(+). The catalysed reaction is dimethylallyl diphosphate + 2 oxidized [2Fe-2S]-[ferredoxin] + H2O = (2E)-4-hydroxy-3-methylbut-2-enyl diphosphate + 2 reduced [2Fe-2S]-[ferredoxin] + 2 H(+). It functions in the pathway isoprenoid biosynthesis; dimethylallyl diphosphate biosynthesis; dimethylallyl diphosphate from (2E)-4-hydroxy-3-methylbutenyl diphosphate: step 1/1. The protein operates within isoprenoid biosynthesis; isopentenyl diphosphate biosynthesis via DXP pathway; isopentenyl diphosphate from 1-deoxy-D-xylulose 5-phosphate: step 6/6. Functionally, catalyzes the conversion of 1-hydroxy-2-methyl-2-(E)-butenyl 4-diphosphate (HMBPP) into a mixture of isopentenyl diphosphate (IPP) and dimethylallyl diphosphate (DMAPP). Acts in the terminal step of the DOXP/MEP pathway for isoprenoid precursor biosynthesis. The chain is 4-hydroxy-3-methylbut-2-enyl diphosphate reductase from Chlamydia muridarum (strain MoPn / Nigg).